A 144-amino-acid polypeptide reads, in one-letter code: Large ribosomal subunit protein uL15 (144 aa).

The interval 1–54 (MRLNTLSPAEGSKKAGKRLGRGIGSGLGKTGGRGHKGQKSRSGGGVRRGFEGGQ) is disordered. Residues 21 to 31 (RGIGSGLGKTG) show a composition bias toward gly residues.

Belongs to the universal ribosomal protein uL15 family. Part of the 50S ribosomal subunit.

Binds to the 23S rRNA. This Escherichia coli (strain K12 / MC4100 / BW2952) protein is Large ribosomal subunit protein uL15.